The sequence spans 297 residues: Heme A synthase (297 aa).

Residues 1–6 (MNRKLS) are Cytoplasmic-facing. A helical membrane pass occupies residues 7–27 (IFSAFVTFTMMIVLLMGGTVT). Residues 28 to 62 (KTDSGNGCGTDWPLCHGELIPTNPSVETMIEYSHR) lie on the Extracellular side of the membrane. Residues Cys35 and Cys42 are joined by a disulfide bond. Residue Glu58 is part of the active site. His61 provides a ligand contact to heme o. Residues 63-83 (AVTGVVGLLIIALCLWTLVAF) traverse the membrane as a helical segment. Topologically, residues 84-90 (KDRLDIK) are cytoplasmic. The chain crosses the membrane as a helical span at residues 91–111 (IFAFLAFIFMLIQSIVGAGAV). At 112–121 (VWQQSDLVMA) the chain is on the extracellular side. A helical membrane pass occupies residues 122–142 (LHFGISLISFASLLILTILIM). Residue His123 coordinates heme o. The Cytoplasmic portion of the chain corresponds to 143 to 160 (ERSGQEFRESVPAFLRKL). The chain crosses the membrane as a helical span at residues 161–181 (LYGLLIYTLIVVYTGAFVRHV). Over 182 to 201 (GATYACVGWPVCSQPTMTFE) the chain is Extracellular. Cysteines 187 and 193 form a disulfide. A helical membrane pass occupies residues 202 to 222 (AWVQMIHRILAGLLFFYTLFV). Position 208 (His208) interacts with heme b. Over 223–236 (HYTAIRLKHRTSRT) the chain is Cytoplasmic. A helical transmembrane segment spans residues 237 to 257 (GMLFATFFISCQVATGAWIVL). The Extracellular segment spans residues 258 to 262 (GGHAT). A helical transmembrane segment spans residues 263-283 (YVPLLHAFLITCYFGVISYLA). His268 contributes to the heme b binding site. At 284-297 (YHAFRTRKKDSRLR) the chain is on the cytoplasmic side.

It belongs to the COX15/CtaA family. Type 1 subfamily. In terms of assembly, interacts with CtaB. Heme b serves as cofactor.

The protein resides in the cell membrane. It catalyses the reaction Fe(II)-heme o + 2 A + H2O = Fe(II)-heme a + 2 AH2. It participates in porphyrin-containing compound metabolism; heme A biosynthesis; heme A from heme O: step 1/1. Its function is as follows. Catalyzes the conversion of heme O to heme A by two successive hydroxylations of the methyl group at C8. The first hydroxylation forms heme I, the second hydroxylation results in an unstable dihydroxymethyl group, which spontaneously dehydrates, resulting in the formyl group of heme A. The protein is Heme A synthase of Exiguobacterium sibiricum (strain DSM 17290 / CCUG 55495 / CIP 109462 / JCM 13490 / 255-15).